Here is a 91-residue protein sequence, read N- to C-terminus: C-C motif chemokine 5 (91 aa).

The first 23 residues, 1 to 23 (MKVSAATFAILLATATFRAPASA), serve as a signal peptide directing secretion. 2 cysteine pairs are disulfide-bonded: C33/C57 and C34/C73.

This sequence belongs to the intercrine beta (chemokine CC) family.

The protein resides in the secreted. In terms of biological role, chemoattractant for blood monocytes, memory T-helper cells and eosinophils. Causes the release of histamine from basophils and activates eosinophils. May activate several chemokine receptors including CCR1, CCR3, CCR4 and CCR5. May also be an agonist of the G protein-coupled receptor GPR75. Together with GPR75, may play a role in neuron survival through activation of a downstream signaling pathway involving the PI3, Akt and MAP kinases. By activating GPR75 may also play a role in insulin secretion by islet cells. In Canis lupus familiaris (Dog), this protein is C-C motif chemokine 5 (CCL5).